Reading from the N-terminus, the 302-residue chain is Sulfate adenylyltransferase subunit 2 (302 aa).

It belongs to the PAPS reductase family. CysD subfamily. Heterodimer composed of CysD, the smaller subunit, and CysN.

The enzyme catalyses sulfate + ATP + H(+) = adenosine 5'-phosphosulfate + diphosphate. It functions in the pathway sulfur metabolism; hydrogen sulfide biosynthesis; sulfite from sulfate: step 1/3. Its function is as follows. With CysN forms the ATP sulfurylase (ATPS) that catalyzes the adenylation of sulfate producing adenosine 5'-phosphosulfate (APS) and diphosphate, the first enzymatic step in sulfur assimilation pathway. APS synthesis involves the formation of a high-energy phosphoric-sulfuric acid anhydride bond driven by GTP hydrolysis by CysN coupled to ATP hydrolysis by CysD. This Pectobacterium carotovorum subsp. carotovorum (strain PC1) protein is Sulfate adenylyltransferase subunit 2.